A 248-amino-acid polypeptide reads, in one-letter code: tRNA (guanine-N(1)-)-methyltransferase (248 aa).

S-adenosyl-L-methionine contacts are provided by residues Gly-126 and 150–155 (LGDYVL). A disordered region spans residues 224–248 (WRRTQQEERTRERRPDLWAAFDSED). A compositionally biased stretch (basic and acidic residues) spans 227–239 (TQQEERTRERRPD).

The protein belongs to the RNA methyltransferase TrmD family. Homodimer.

It is found in the cytoplasm. The enzyme catalyses guanosine(37) in tRNA + S-adenosyl-L-methionine = N(1)-methylguanosine(37) in tRNA + S-adenosyl-L-homocysteine + H(+). Specifically methylates guanosine-37 in various tRNAs. In Micrococcus luteus (strain ATCC 4698 / DSM 20030 / JCM 1464 / CCM 169 / CCUG 5858 / IAM 1056 / NBRC 3333 / NCIMB 9278 / NCTC 2665 / VKM Ac-2230) (Micrococcus lysodeikticus), this protein is tRNA (guanine-N(1)-)-methyltransferase.